The primary structure comprises 460 residues: Bifunctional protein GlmU (460 aa).

Residues 1–229 (MSKLNIVVLA…VWETTGVNSK (229 aa)) are pyrophosphorylase. Residues 9-12 (LAAG), Lys23, Gln74, 79-80 (GT), 101-103 (YGD), Gly138, Glu154, Asn169, and Asn227 contribute to the UDP-N-acetyl-alpha-D-glucosamine site. Asp103 serves as a coordination point for Mg(2+). Asn227 contacts Mg(2+). The interval 230 to 250 (VQLAGLERIYQTAQANKLLEQ) is linker. Positions 251 to 460 (GVALADPARI…RPVKKPKPKN (210 aa)) are N-acetyltransferase. Positions 333 and 351 each coordinate UDP-N-acetyl-alpha-D-glucosamine. Residue His363 is the Proton acceptor of the active site. UDP-N-acetyl-alpha-D-glucosamine is bound by residues Tyr366 and Asn377. Acetyl-CoA is bound by residues Ala380, 386–387 (NY), Ser405, Ala423, and Arg440.

This sequence in the N-terminal section; belongs to the N-acetylglucosamine-1-phosphate uridyltransferase family. It in the C-terminal section; belongs to the transferase hexapeptide repeat family. As to quaternary structure, homotrimer. Mg(2+) serves as cofactor.

The protein localises to the cytoplasm. The enzyme catalyses alpha-D-glucosamine 1-phosphate + acetyl-CoA = N-acetyl-alpha-D-glucosamine 1-phosphate + CoA + H(+). The catalysed reaction is N-acetyl-alpha-D-glucosamine 1-phosphate + UTP + H(+) = UDP-N-acetyl-alpha-D-glucosamine + diphosphate. It participates in nucleotide-sugar biosynthesis; UDP-N-acetyl-alpha-D-glucosamine biosynthesis; N-acetyl-alpha-D-glucosamine 1-phosphate from alpha-D-glucosamine 6-phosphate (route II): step 2/2. Its pathway is nucleotide-sugar biosynthesis; UDP-N-acetyl-alpha-D-glucosamine biosynthesis; UDP-N-acetyl-alpha-D-glucosamine from N-acetyl-alpha-D-glucosamine 1-phosphate: step 1/1. It functions in the pathway bacterial outer membrane biogenesis; LPS lipid A biosynthesis. In terms of biological role, catalyzes the last two sequential reactions in the de novo biosynthetic pathway for UDP-N-acetylglucosamine (UDP-GlcNAc). The C-terminal domain catalyzes the transfer of acetyl group from acetyl coenzyme A to glucosamine-1-phosphate (GlcN-1-P) to produce N-acetylglucosamine-1-phosphate (GlcNAc-1-P), which is converted into UDP-GlcNAc by the transfer of uridine 5-monophosphate (from uridine 5-triphosphate), a reaction catalyzed by the N-terminal domain. The protein is Bifunctional protein GlmU of Nitrosospira multiformis (strain ATCC 25196 / NCIMB 11849 / C 71).